The primary structure comprises 394 residues: Elongation factor Tu (394 aa).

Positions 10–204 (KPHVNVGTIG…HLDTYIPEPE (195 aa)) constitute a tr-type G domain. Positions 19 to 26 (GHVDHGKT) are G1. 19–26 (GHVDHGKT) lines the GTP pocket. Thr-26 provides a ligand contact to Mg(2+). A G2 region spans residues 60–64 (GITIN). The interval 81–84 (DCPG) is G3. Residues 81-85 (DCPGH) and 136-139 (NKCD) each bind GTP. Residues 136–139 (NKCD) are G4. The segment at 174–176 (SAL) is G5.

It belongs to the TRAFAC class translation factor GTPase superfamily. Classic translation factor GTPase family. EF-Tu/EF-1A subfamily. Monomer.

The protein resides in the cytoplasm. It carries out the reaction GTP + H2O = GDP + phosphate + H(+). Its function is as follows. GTP hydrolase that promotes the GTP-dependent binding of aminoacyl-tRNA to the A-site of ribosomes during protein biosynthesis. The chain is Elongation factor Tu from Klebsiella pneumoniae subsp. pneumoniae (strain ATCC 700721 / MGH 78578).